A 510-amino-acid chain; its full sequence is Probable malate:quinone oxidoreductase (510 aa).

It belongs to the MQO family. It depends on FAD as a cofactor.

The enzyme catalyses (S)-malate + a quinone = a quinol + oxaloacetate. Its pathway is carbohydrate metabolism; tricarboxylic acid cycle; oxaloacetate from (S)-malate (quinone route): step 1/1. The sequence is that of Probable malate:quinone oxidoreductase from Wigglesworthia glossinidia brevipalpis.